A 769-amino-acid polypeptide reads, in one-letter code: Signal transducer and activator of transcription 3.1 (769 aa).

Positions 150–162 match the Essential for nuclear import motif; the sequence is DVRKKVQDLEQKM. Residues 580–670 form the SH2 domain; the sequence is WNEGYIMGFI…DATNILVSPL (91 aa). Serine 728 bears the Phosphoserine; by NLK mark.

It belongs to the transcription factor STAT family. As to quaternary structure, forms a homodimer or a heterodimer with a related family member, such as stat1. Interacts with nlk.2. In terms of processing, phosphorylation of both tyrosine and serine residues, together with dimerization, is required for mesoderm induction.

It localises to the cytoplasm. The protein localises to the nucleus. Transcription factor that binds to target promoter sequences and activates transcription upon il6st/gp130 stimulation. Mediates ventralization of embryos, at least in part via inhibition of smad2 signaling. Required for hairy2 to induce dll1/delta1 and promote neural crest cell proliferation and differentiation. Involved in TGFbeta-mediated mesoderm induction in early embryos, acting downstream of map3k7/tak1 and nlk.2. This is Signal transducer and activator of transcription 3.1 (stat3.1) from Xenopus laevis (African clawed frog).